Here is a 74-residue protein sequence, read N- to C-terminus: Brevinin-2CG1 (74 aa).

An N-terminal signal peptide occupies residues 1–22; sequence MFTMKKSMLVLFFLGTISLSLC. Residues 23–39 constitute a propeptide, removed in mature form; that stretch reads EEERNADEDDGEMTEEV. An intrachain disulfide couples cysteine 68 to cysteine 74.

In terms of tissue distribution, expressed by the skin glands.

It localises to the secreted. In terms of biological role, antimicrobial peptide active against a variety of Gram-positive and some Gram-negative bacterial strains. Has antifungal activity against a slime mold isolate. Has hemolytic activity against human erythrocytes. In Amolops chunganensis (Chungan torrent frog), this protein is Brevinin-2CG1.